A 144-amino-acid chain; its full sequence is Transcriptional regulator SlyA (144 aa).

Residues 2 to 135 (ESPLGSDLAR…LLHLIRKLEQ (134 aa)) enclose the HTH marR-type domain. Residues 49–72 (QIQLAKAIGIEQPSLVRTLDQLEE) constitute a DNA-binding region (H-T-H motif).

The protein belongs to the SlyA family. In terms of assembly, homodimer.

Transcription regulator that can specifically activate or repress expression of target genes. This chain is Transcriptional regulator SlyA, found in Klebsiella pneumoniae (strain 342).